Here is a 476-residue protein sequence, read N- to C-terminus: Adenosylhomocysteinase (476 aa).

Residues Thr-67, Asp-142, and Glu-202 each contribute to the substrate site. 203 to 205 lines the NAD(+) pocket; that stretch reads TTT. The substrate site is built by Lys-232 and Asp-236. NAD(+) contacts are provided by residues Asn-237, 266 to 271, Glu-289, Asn-324, 345 to 347, and Asn-390; these read GYGDVG and IGH.

This sequence belongs to the adenosylhomocysteinase family. The cofactor is NAD(+).

The protein resides in the cytoplasm. It carries out the reaction S-adenosyl-L-homocysteine + H2O = L-homocysteine + adenosine. It functions in the pathway amino-acid biosynthesis; L-homocysteine biosynthesis; L-homocysteine from S-adenosyl-L-homocysteine: step 1/1. In terms of biological role, may play a key role in the regulation of the intracellular concentration of adenosylhomocysteine. The polypeptide is Adenosylhomocysteinase (Prochlorococcus marinus (strain MIT 9313)).